The primary structure comprises 465 residues: Glutamate--tRNA ligase 2 (465 aa).

Residues 8–18 carry the 'HIGH' region motif; that stretch reads PSPTGLMHLGN. A 'KMSKS' region motif is present at residues 249–253; the sequence is PLSKR. Lysine 252 serves as a coordination point for ATP.

Belongs to the class-I aminoacyl-tRNA synthetase family. Glutamate--tRNA ligase type 1 subfamily. As to quaternary structure, monomer.

It is found in the cytoplasm. It catalyses the reaction tRNA(Glu) + L-glutamate + ATP = L-glutamyl-tRNA(Glu) + AMP + diphosphate. Functionally, catalyzes the attachment of glutamate to tRNA(Glu) in a two-step reaction: glutamate is first activated by ATP to form Glu-AMP and then transferred to the acceptor end of tRNA(Glu). This chain is Glutamate--tRNA ligase 2, found in Coxiella burnetii (strain CbuK_Q154) (Coxiella burnetii (strain Q154)).